We begin with the raw amino-acid sequence, 546 residues long: Protein phosphatase 1G (546 aa).

A lipid anchor (N-myristoyl glycine) is attached at glycine 2. Arginine 22 is modified (omega-N-methylarginine). The region spanning 26–505 (PYGFSAMQGW…DNMTCIIICF (480 aa)) is the PPM-type phosphatase domain. Residues aspartate 60 and glycine 61 each coordinate Mn(2+). Disordered stretches follow at residues 116-139 (QIAG…DVDN) and 161-328 (GQNC…SDSG). At threonine 122 the chain carries Phosphothreonine. Residues 123–139 (EDEDEKEKVADEDDVDN) show a composition bias toward acidic residues. At serine 183 the chain carries Phosphoserine. Residues 259–312 (DSEDESDEAEEEEEDSEECSEEEDGYSSEEAENEEDEDDTEEAEEDDEEEEEEM) show a composition bias toward acidic residues. N6-acetyllysine is present on lysine 383. 2 residues coordinate Mn(2+): aspartate 441 and aspartate 496. Residues 512–546 (ELQPESGKRKLEEVLSTEGAEENGNSDKKKKAKRD) form a disordered region. Phosphoserine is present on serine 527.

It belongs to the PP2C family. Interacts with NOL3; may dephosphorylate NOL3. Mg(2+) is required as a cofactor. It depends on Mn(2+) as a cofactor. Widely expressed. Most abundant in testis, skeletal muscle, and heart.

Its subcellular location is the cytoplasm. The protein localises to the membrane. The enzyme catalyses O-phospho-L-seryl-[protein] + H2O = L-seryl-[protein] + phosphate. It carries out the reaction O-phospho-L-threonyl-[protein] + H2O = L-threonyl-[protein] + phosphate. The protein is Protein phosphatase 1G (PPM1G) of Homo sapiens (Human).